The primary structure comprises 363 residues: Phosphoserine aminotransferase (363 aa).

Arg42 serves as a coordination point for L-glutamate. Pyridoxal 5'-phosphate contacts are provided by residues 76–77 (GR), Trp102, Thr156, Asp175, and Gln198. Lys199 is subject to N6-(pyridoxal phosphate)lysine. 240–241 (NT) provides a ligand contact to pyridoxal 5'-phosphate.

The protein belongs to the class-V pyridoxal-phosphate-dependent aminotransferase family. SerC subfamily. Homodimer. Pyridoxal 5'-phosphate is required as a cofactor.

The protein localises to the cytoplasm. It catalyses the reaction O-phospho-L-serine + 2-oxoglutarate = 3-phosphooxypyruvate + L-glutamate. The enzyme catalyses 4-(phosphooxy)-L-threonine + 2-oxoglutarate = (R)-3-hydroxy-2-oxo-4-phosphooxybutanoate + L-glutamate. It participates in amino-acid biosynthesis; L-serine biosynthesis; L-serine from 3-phospho-D-glycerate: step 2/3. It functions in the pathway cofactor biosynthesis; pyridoxine 5'-phosphate biosynthesis; pyridoxine 5'-phosphate from D-erythrose 4-phosphate: step 3/5. Functionally, catalyzes the reversible conversion of 3-phosphohydroxypyruvate to phosphoserine and of 3-hydroxy-2-oxo-4-phosphonooxybutanoate to phosphohydroxythreonine. This Shewanella baltica (strain OS195) protein is Phosphoserine aminotransferase.